The sequence spans 282 residues: HTH-type transcriptional activator RhaR (282 aa).

An HTH araC/xylS-type domain is found at 179–277 (DKLITALANS…GMTPSQWRHL (99 aa)). 2 consecutive DNA-binding regions (H-T-H motif) follow at residues 196-217 (DAFC…RAQT) and 244-267 (ISEI…TRET).

In terms of assembly, binds DNA as a dimer.

The protein resides in the cytoplasm. Functionally, activates expression of the rhaSR operon in response to L-rhamnose. This Salmonella dublin (strain CT_02021853) protein is HTH-type transcriptional activator RhaR.